We begin with the raw amino-acid sequence, 924 residues long: DNA repair and recombination protein RDH54 (924 aa).

The segment covering 1–10 (MQIPKYENKP) has biased composition (basic and acidic residues). 2 disordered regions span residues 1–21 (MQIP…GSNK) and 155–183 (EALS…NDGG). The segment covering 168 to 178 (TTSTTETVPST) has biased composition (low complexity). The Helicase ATP-binding domain occupies 299–487 (LENDSDISGC…FTIIDFINPG (189 aa)). ATP is bound at residue 346–353 (IPLTGLCK). Residues 472–475 (NDLN) carry the DEGH box motif. Lys615 is covalently cross-linked (Glycyl lysine isopeptide (Lys-Gly) (interchain with G-Cter in ubiquitin)). Positions 631 to 790 (KLKVLMTLLE…DSEMRNKESS (160 aa)) constitute a Helicase C-terminal domain.

It belongs to the SNF2/RAD54 helicase family. In terms of assembly, interacts with RAD51 and DMC1.

It is found in the nucleus. The catalysed reaction is ATP + H2O = ADP + phosphate + H(+). Involved in the recombinational repair of double-strand breaks (DSB) in DNA during mitosis and meiosis. Has DNA dependent ATPase activity. Promotes D-loop (displacement loop) formation with RAD51 recombinase. Modifies the topology of double-stranded DNA during the D-loop reaction to facilitate the invasion of the homologous duplex molecule by the initiating single-stranded DNA substrate. Required for adaptation from G2/M checkpoint arrest induced by a double strand break, by participating in monitoring the extent of single-stranded DNA produced by resection of DNA ends. This role is distinct from its roles in recombination. Promotes colocalization of RAD51 and DMC1 during meiotic recombination. Involved in crossover interference. This chain is DNA repair and recombination protein RDH54 (RDH54), found in Saccharomyces cerevisiae (strain JAY291) (Baker's yeast).